Reading from the N-terminus, the 284-residue chain is Elongation factor Ts (284 aa).

An involved in Mg(2+) ion dislocation from EF-Tu region spans residues 80–83; that stretch reads TDFV.

This sequence belongs to the EF-Ts family.

The protein localises to the cytoplasm. In terms of biological role, associates with the EF-Tu.GDP complex and induces the exchange of GDP to GTP. It remains bound to the aminoacyl-tRNA.EF-Tu.GTP complex up to the GTP hydrolysis stage on the ribosome. The polypeptide is Elongation factor Ts (Neisseria meningitidis serogroup C (strain 053442)).